Reading from the N-terminus, the 542-residue chain is Gamma-terpinene synthase 1 (542 aa).

Residues Asp-295 and Asp-299 each contribute to the Mn(2+) site. Positions 295-299 (DDVYD) match the DDXXD motif motif. Homodimerization regions lie at residues 301 to 307 (YDTLDEL) and 373 to 410 (EAKW…FTLP). Positions 439 and 447 each coordinate Mn(2+).

It belongs to the terpene synthase family. As to quaternary structure, homodimer. Requires Mn(2+) as cofactor. Mg(2+) is required as a cofactor. Mostly expressed in flowers and, to a lower extent, in leaves, especially in glandular trichomes.

The enzyme catalyses (2E)-geranyl diphosphate = gamma-terpinene + diphosphate. It carries out the reaction (2E)-geranyl diphosphate = alpha-terpinene + diphosphate. The protein operates within secondary metabolite biosynthesis; terpenoid biosynthesis. Involved in the biosynthesis of phenolic monoterpenes natural products thymol and carvacrol which have a broad range of biological activities acting as antimicrobial compounds, insecticides, antioxidants and pharmaceutical agents. Monoterpene synthase which catalyzes the conversion of geranyl diphosphate (GPP) to gamma-terpinene and the minor products alpha-thujene, alpha-terpinene, myrcene, sabinene, (+)-R-limonene, alpha-pinene and alpha-phellandrene. The chain is Gamma-terpinene synthase 1 from Thymus vulgaris (Thyme).